Here is a 368-residue protein sequence, read N- to C-terminus: uncharacterized protein (368 aa).

It belongs to the CdaR family.

This is an uncharacterized protein from Bacillus subtilis (strain 168).